The following is a 145-amino-acid chain: 3-hydroxyacyl-[acyl-carrier-protein] dehydratase FabZ (145 aa).

Histidine 50 is a catalytic residue.

Belongs to the thioester dehydratase family. FabZ subfamily.

It localises to the cytoplasm. It catalyses the reaction a (3R)-hydroxyacyl-[ACP] = a (2E)-enoyl-[ACP] + H2O. In terms of biological role, involved in unsaturated fatty acids biosynthesis. Catalyzes the dehydration of short chain beta-hydroxyacyl-ACPs and long chain saturated and unsaturated beta-hydroxyacyl-ACPs. In Coxiella burnetii (strain CbuK_Q154) (Coxiella burnetii (strain Q154)), this protein is 3-hydroxyacyl-[acyl-carrier-protein] dehydratase FabZ.